The following is an 813-amino-acid chain: Glycerol-3-phosphate acyltransferase (813 aa).

The HXXXXD motif motif lies at 304 to 309 (CHRSHI).

Belongs to the GPAT/DAPAT family.

It localises to the cell inner membrane. The enzyme catalyses sn-glycerol 3-phosphate + an acyl-CoA = a 1-acyl-sn-glycero-3-phosphate + CoA. The protein operates within phospholipid metabolism; CDP-diacylglycerol biosynthesis; CDP-diacylglycerol from sn-glycerol 3-phosphate: step 1/3. The protein is Glycerol-3-phosphate acyltransferase of Actinobacillus succinogenes (strain ATCC 55618 / DSM 22257 / CCUG 43843 / 130Z).